The sequence spans 317 residues: Apolipoprotein E (317 aa).

Residues 1 to 18 (MKALWVALVVTLLAGCRA) form the signal peptide. 8 tandem repeats follow at residues 79–100 (ALME…EQLS), 101–122 (PVAQ…ARLG), 123–144 (TDME…AMLG), 145–166 (QTTD…KRLL), 167–188 (RDAE…EGAE), 189–210 (RSVS…LGTA), 211–232 (TTST…QKLR), and 233–254 (GRLE…EQLE). The tract at residues 79-254 (ALMEETMKEV…RLDKMREQLE (176 aa)) is 8 X 22 AA approximate tandem repeats. Methionine sulfoxide is present on Met142. The LDL and other lipoprotein receptors binding stretch occupies residues 157–167 (HLRKLRKRLLR). A heparin-binding site is contributed by 161–164 (LRKR). The interval 209–289 (TATTSTLGSQ…GWFQPLVEDL (81 aa)) is lipid-binding and lipoprotein association. Thr211 is a glycosylation site (O-linked (GalNAc...) threonine). Residue 228-235 (GQKLRGRL) participates in heparin binding. The homooligomerization stretch occupies residues 265–317 (SQMRLQAETFQARLKGWFQPLVEDLQRQWAGLVEKVQQLAVGTTPTPAASKNQ). Residues 277–289 (RLKGWFQPLVEDL) are specificity for association with VLDL. The O-linked (GalNAc...) threonine glycan is linked to Thr310.

It belongs to the apolipoprotein A1/A4/E family. As to quaternary structure, homotetramer. May interact with ABCA1; functionally associated with ABCA1 in the biogenesis of HDLs. May interact with APP/A4 amyloid-beta peptide; the interaction is extremely stable in vitro but its physiological significance is unclear. May interact with MAPT. May interact with MAP2. In the cerebrospinal fluid, interacts with secreted SORL1. Interacts with PMEL; this allows the loading of PMEL luminal fragment on ILVs to induce fibril nucleation. Post-translationally, APOE exists as multiple glycosylated and sialylated glycoforms within cells and in plasma. The extent of glycosylation and sialylation are tissue and context specific. In terms of processing, glycated in plasma VLDL. Phosphorylated by FAM20C in the extracellular medium.

Its subcellular location is the secreted. It is found in the extracellular space. The protein resides in the extracellular matrix. It localises to the extracellular vesicle. The protein localises to the endosome. Its subcellular location is the multivesicular body. Its function is as follows. APOE is an apolipoprotein, a protein associating with lipid particles, that mainly functions in lipoprotein-mediated lipid transport between organs via the plasma and interstitial fluids. APOE is a core component of plasma lipoproteins and is involved in their production, conversion and clearance. Apolipoproteins are amphipathic molecules that interact both with lipids of the lipoprotein particle core and the aqueous environment of the plasma. As such, APOE associates with chylomicrons, chylomicron remnants, very low density lipoproteins (VLDL) and intermediate density lipoproteins (IDL) but shows a preferential binding to high-density lipoproteins (HDL). It also binds a wide range of cellular receptors including the LDL receptor/LDLR and the very low-density lipoprotein receptor/VLDLR that mediate the cellular uptake of the APOE-containing lipoprotein particles. Finally, APOE also has a heparin-binding activity and binds heparan-sulfate proteoglycans on the surface of cells, a property that supports the capture and the receptor-mediated uptake of APOE-containing lipoproteins by cells. This Camelus dromedarius (Dromedary) protein is Apolipoprotein E (APOE).